Reading from the N-terminus, the 297-residue chain is D-alanine--D-alanine ligase (297 aa).

In terms of domain architecture, ATP-grasp spans 103–293; that stretch reads KEILMHHRMP…FDSFVKSILE (191 aa). 129–180 serves as a coordination point for ATP; it reads ISFPVAVKPSSGGSSIATFKVKSLEELENAYQQASKHGEVMIEQWVTGKEIT. The Mg(2+) site is built by aspartate 247, glutamate 260, and asparagine 262.

The protein belongs to the D-alanine--D-alanine ligase family. The cofactor is Mg(2+). It depends on Mn(2+) as a cofactor.

It localises to the cytoplasm. The enzyme catalyses 2 D-alanine + ATP = D-alanyl-D-alanine + ADP + phosphate + H(+). The protein operates within cell wall biogenesis; peptidoglycan biosynthesis. Cell wall formation. The sequence is that of D-alanine--D-alanine ligase from Francisella philomiragia subsp. philomiragia (strain ATCC 25017 / CCUG 19701 / FSC 153 / O#319-036).